The sequence spans 532 residues: Vesicular acetylcholine transporter unc-17 (532 aa).

Over methionine 1 to lysine 31 the chain is Cytoplasmic. The chain crosses the membrane as a helical span at residues cysteine 32–valine 52. Residues proline 53 to glutamate 101 are Lumenal, vesicle-facing. Residues asparagine 74 and asparagine 81 are each glycosylated (N-linked (GlcNAc...) asparagine). Residues leucine 102 to glycine 121 traverse the membrane as a helical segment. The Cytoplasmic portion of the chain corresponds to tyrosine 122 to glutamate 130. The chain crosses the membrane as a helical span at residues isoleucine 131 to lysine 151. The Lumenal, vesicle portion of the chain corresponds to serine 152 to arginine 160. A helical transmembrane segment spans residues serine 161–aspartate 180. Residues arginine 181–alanine 191 lie on the Cytoplasmic side of the membrane. The chain crosses the membrane as a helical span at residues leucine 192–leucine 213. Topologically, residues tyrosine 214–lysine 219 are lumenal, vesicle. A helical transmembrane segment spans residues proline 220–asparagine 242. The Cytoplasmic segment spans residues proline 243–aspartate 266. A helical membrane pass occupies residues proline 267–leucine 286. The Lumenal, vesicle portion of the chain corresponds to glutamate 287–glycine 303. The chain crosses the membrane as a helical span at residues tryptophan 304–leucine 328. Topologically, residues arginine 329–threonine 335 are cytoplasmic. The chain crosses the membrane as a helical span at residues tryptophan 336 to threonine 356. Residues threonine 357–serine 367 lie on the Lumenal, vesicle side of the membrane. Residues phenylalanine 368–valine 388 traverse the membrane as a helical segment. At aspartate 389–valine 393 the chain is on the cytoplasmic side. Residues serine 394–alanine 412 traverse the membrane as a helical segment. Residues phenylalanine 413–alanine 418 are Lumenal, vesicle-facing. The helical transmembrane segment at glycine 419 to threonine 440 threads the bilayer. The Cytoplasmic segment spans residues tyrosine 441–tryptophan 532.

The protein belongs to the major facilitator superfamily. Vesicular transporter family. In terms of tissue distribution, detected in most regions of the nervous system including the nerve ring, the ventral and dorsal nerve cords, and the pharyngeal nervous system. Expressed in most cholinergic neurons. In addition, expressed in SIA, SIB and SMB sublateral motor neurons.

The protein localises to the cytoplasmic vesicle. The protein resides in the secretory vesicle. Its subcellular location is the synaptic vesicle membrane. In terms of biological role, involved in acetylcholine transport into synaptic vesicles. The protein is Vesicular acetylcholine transporter unc-17 of Caenorhabditis elegans.